A 117-amino-acid chain; its full sequence is Large ribosomal subunit protein bL20c (117 aa).

Belongs to the bacterial ribosomal protein bL20 family.

Its subcellular location is the plastid. The protein resides in the chloroplast. Binds directly to 23S ribosomal RNA and is necessary for the in vitro assembly process of the 50S ribosomal subunit. It is not involved in the protein synthesizing functions of that subunit. The sequence is that of Large ribosomal subunit protein bL20c from Buxus microphylla (Littleleaf boxwood).